Here is an 88-residue protein sequence, read N- to C-terminus: Histone H2A-beta, sperm (88 aa).

The protein belongs to the histone H2A family. In terms of assembly, the nucleosome is a histone octamer containing two molecules each of H2A, H2B, H3 and H4 assembled in one H3-H4 heterotetramer and two H2A-H2B heterodimers. The octamer wraps approximately 147 bp of DNA. Monoubiquitination in C-terminus gives a specific tag for epigenetic transcriptional repression.

The protein localises to the nucleus. Its subcellular location is the chromosome. Its function is as follows. Core component of nucleosome. Nucleosomes wrap and compact DNA into chromatin, limiting DNA accessibility to the cellular machineries which require DNA as a template. Histones thereby play a central role in transcription regulation, DNA repair, DNA replication and chromosomal stability. DNA accessibility is regulated via a complex set of post-translational modifications of histones, also called histone code, and nucleosome remodeling. This is Histone H2A-beta, sperm from Strongylocentrotus purpuratus (Purple sea urchin).